The sequence spans 630 residues: E3 ubiquitin-protein ligase TRIM41 (630 aa).

The segment at 20–61 adopts an RING-type; degenerate zinc-finger fold; the sequence is CAICLDYFTDPVSIGCGHNFCRVCVTQLWGGEDEEDRDELDR. Acidic residues predominate over residues 51-75; it reads EDEEDRDELDREEEEEEVGEEEEVE. Disordered stretches follow at residues 51 to 97 and 148 to 176; these read EDEE…GDME and EDED…PPPA. Threonine 85 carries the phosphothreonine modification. Acidic residues predominate over residues 148-166; it reads EDEDEEEEVLEEDEEEELD. A B box-type zinc finger spans residues 222–263; sequence NEQGICPRHQEALKLFCEVDEEAICVVCRESRSHKQHSVVPL. The Zn(2+) site is built by cysteine 227, histidine 230, cysteine 249, and histidine 255. A Glycyl lysine isopeptide (Lys-Gly) (interchain with G-Cter in SUMO2) cross-link involves residue lysine 256. The stretch at 281–374 forms a coiled coil; it reads LRKHLEAVQK…AEAQERSQQG (94 aa). A B30.2/SPRY domain is found at 413-630; it reads LTDAIVRKMS…SKGTRIKLCP (218 aa). Serine 447 is modified (phosphoserine). The tract at residues 503 to 535 is disordered; it reads ARESTHHKEKVGSGGSSVSSGDASSSRHHHRRR.

This sequence belongs to the TRIM/RBCC family. As to quaternary structure, interacts with PRKCA. Interacts with NOD2. Interacts with TRIM17; this interaction prevents TRIM41 activity on ZSCAN2. Auto-ubiquitinated.

The protein resides in the cytoplasm. The protein localises to the nucleus. It catalyses the reaction S-ubiquitinyl-[E2 ubiquitin-conjugating enzyme]-L-cysteine + [acceptor protein]-L-lysine = [E2 ubiquitin-conjugating enzyme]-L-cysteine + N(6)-ubiquitinyl-[acceptor protein]-L-lysine.. Its pathway is protein modification; protein ubiquitination. Functionally, E3 ligase that plays essential roles in innate antiviral response. Directly binds to influenza A virus or vesicular stomatitis virus nucleoproteins and targets them for ubiquitination and proteasomal degradation, thereby limiting viral infections. Activates the innate antiviral response by catalyzing monoubiquitination of CGAS, thereby activating CGAS. Also involved in innate antiviral response by mediating 'Lys-63'-linked polyubiquitylation of BCL10 which in turn hubs NEMO for activation of NF-kappa-B and IRF3 pathways. Catalyzes the ubiquitin-mediated degradation of other substrates including protein kinase C, ZSCAN21 or TOP3B suggesting additional roles besides its function in immune response. The protein is E3 ubiquitin-protein ligase TRIM41 of Mus musculus (Mouse).